Here is a 141-residue protein sequence, read N- to C-terminus: Small ribosomal subunit protein bS6 (141 aa).

Residues 97–141 (TGQSEMLKAEENRSERRERRDRPEHADSADGDDSDNSDASDNADE) are disordered. Basic and acidic residues predominate over residues 103–124 (LKAEENRSERRERRDRPEHADS). The segment covering 125-141 (ADGDDSDNSDASDNADE) has biased composition (acidic residues).

Belongs to the bacterial ribosomal protein bS6 family.

Binds together with bS18 to 16S ribosomal RNA. The chain is Small ribosomal subunit protein bS6 from Pseudomonas fluorescens (strain ATCC BAA-477 / NRRL B-23932 / Pf-5).